A 351-amino-acid polypeptide reads, in one-letter code: MDYESIKKILFHFDPETAHHIAESAFELASFFPFILNRLQEKFLVKDPMLSQELFGKTFCNPLGIAAGFDKNATMTKTLHALGFGYVEIGTVTPKPQSGNPKPRLFRYIKQEAIQNAMGFNNDGAEVIKARLQRITPASFPIGVNIGKNKTTPDEQALQDYRFLIKTFHSLSDYLVINISSPNTPGLRDLQNESFIKELFSMAKELTNTPVLLKIAPDMSEDQAVSLCSTAVDAGAAGVIATNTSIDYSLLRGAKDFGGVSGKVIKEKSFAIFKAVAKELFGKTVLISVGGIDSAEEAYRRIRHGATLLQIYTSFIYGGPGLVKSINEGLIEYLKKDGFTHISEAIGIDIR.

FMN-binding positions include 67–71 (AGFDK) and Thr91. Lys71 lines the substrate pocket. Position 116–120 (116–120 (NAMGF)) interacts with substrate. FMN-binding residues include Asn145 and Asn178. Asn178 provides a ligand contact to substrate. The active-site Nucleophile is Ser181. Asn183 lines the substrate pocket. 2 residues coordinate FMN: Lys214 and Thr242. 243–244 (NT) serves as a coordination point for substrate. FMN contacts are provided by residues Gly262, Gly291, and 312-313 (YT).

It belongs to the dihydroorotate dehydrogenase family. Type 2 subfamily. In terms of assembly, monomer. It depends on FMN as a cofactor.

It localises to the cell membrane. It catalyses the reaction (S)-dihydroorotate + a quinone = orotate + a quinol. It functions in the pathway pyrimidine metabolism; UMP biosynthesis via de novo pathway; orotate from (S)-dihydroorotate (quinone route): step 1/1. In terms of biological role, catalyzes the conversion of dihydroorotate to orotate with quinone as electron acceptor. In Nitratiruptor sp. (strain SB155-2), this protein is Dihydroorotate dehydrogenase (quinone).